The sequence spans 259 residues: 3'-5' ssDNA/RNA exonuclease TatD (259 aa).

A divalent metal cation is bound by residues Glu-92, His-128, and His-153.

It belongs to the metallo-dependent hydrolases superfamily. TatD-type hydrolase family. TatD subfamily. Monomer. Mg(2+) serves as cofactor.

The protein resides in the cytoplasm. In terms of biological role, 3'-5' exonuclease that prefers single-stranded DNA and RNA. May play a role in the H(2)O(2)-induced DNA damage repair. This chain is 3'-5' ssDNA/RNA exonuclease TatD, found in Erwinia tasmaniensis (strain DSM 17950 / CFBP 7177 / CIP 109463 / NCPPB 4357 / Et1/99).